Reading from the N-terminus, the 278-residue chain is 4-deoxy-L-threo-5-hexosulose-uronate ketol-isomerase (278 aa).

Zn(2+) is bound by residues His-196, His-198, Glu-203, and His-245.

Belongs to the KduI family. Zn(2+) serves as cofactor.

The catalysed reaction is 5-dehydro-4-deoxy-D-glucuronate = 3-deoxy-D-glycero-2,5-hexodiulosonate. The protein operates within glycan metabolism; pectin degradation; 2-dehydro-3-deoxy-D-gluconate from pectin: step 4/5. Functionally, catalyzes the isomerization of 5-dehydro-4-deoxy-D-glucuronate to 3-deoxy-D-glycero-2,5-hexodiulosonate. In Yersinia enterocolitica serotype O:8 / biotype 1B (strain NCTC 13174 / 8081), this protein is 4-deoxy-L-threo-5-hexosulose-uronate ketol-isomerase.